The sequence spans 75 residues: Exodeoxyribonuclease 7 small subunit (75 aa).

It belongs to the XseB family. Heterooligomer composed of large and small subunits.

It is found in the cytoplasm. It carries out the reaction Exonucleolytic cleavage in either 5'- to 3'- or 3'- to 5'-direction to yield nucleoside 5'-phosphates.. Its function is as follows. Bidirectionally degrades single-stranded DNA into large acid-insoluble oligonucleotides, which are then degraded further into small acid-soluble oligonucleotides. The sequence is that of Exodeoxyribonuclease 7 small subunit from Nostoc punctiforme (strain ATCC 29133 / PCC 73102).